We begin with the raw amino-acid sequence, 597 residues long: Glypican-3 (597 aa).

Positions 1-24 (MAGTVRTACLLVAMLLGLGCLGQA) are cleaved as a signal peptide. A Pyrrolidone carboxylic acid modification is found at Gln-25. 7 cysteine pairs are disulfide-bonded: Cys-34-Cys-71, Cys-64-Cys-261, Cys-72-Cys-264, Cys-196-Cys-348, Cys-251-Cys-284, Cys-273-Cys-421, and Cys-277-Cys-409. N-linked (GlcNAc...) asparagine glycans are attached at residues Asn-123 and Asn-240. Ser-351 is subject to Phosphoserine. The N-linked (GlcNAc...) asparagine glycan is linked to Asn-417. O-linked (Xyl...) (glycosaminoglycan) serine glycans are attached at residues Ser-494 and Ser-508. Positions 533–553 (DAPGNKQHGNQKDNEITTSHS) are disordered.

This sequence belongs to the glypican family. In terms of assembly, heterodimer; disulfide-linked. Cleavage by a furin-like convertase results in production of alpha and beta chains which form a disulfide-linked heterodimer. Interacts with DPP4. Interacts with FGF2. Interacts with WNT5A. Also interacts with WNT3A and WNT7B. Interacts with hedgehog protein SHH; the heparan sulfate chains are not required for the interaction. Also interacts with hedgehog protein IHH. Interacts with CD81. Interacts with Wnt receptors FZD4, FZD7 and FZD8; the heparan sulfate chains are required for the interaction. Post-translationally, O-glycosylated; contains heparan sulfate and/or chondroitin sulfate. Cleaved intracellularly by a furin-like convertase to generate 2 subunits, alpha and beta, which remain associated through disulfide bonds and are associated with the cell surface via the GPI-anchor. This processing is essential for its role in inhibition of hedgehog signaling. A second proteolytic event may result in cleavage of the protein on the cell surface, separating it from the GPI-anchor and leading to its shedding from the cell surface.

The protein resides in the cell membrane. Its function is as follows. Cell surface proteoglycan. Negatively regulates the hedgehog signaling pathway when attached via the GPI-anchor to the cell surface by competing with the hedgehog receptor PTC1 for binding to hedgehog proteins. Binding to the hedgehog protein SHH triggers internalization of the complex by endocytosis and its subsequent lysosomal degradation. Positively regulates the canonical Wnt signaling pathway by binding to the Wnt receptor Frizzled and stimulating the binding of the Frizzled receptor to Wnt ligands. Positively regulates the non-canonical Wnt signaling pathway. Binds to CD81 which decreases the availability of free CD81 for binding to the transcriptional repressor HHEX, resulting in nuclear translocation of HHEX and transcriptional repression. Inhibits the dipeptidyl peptidase activity of DPP4. Plays a role in limb patterning and skeletal development by controlling the cellular response to BMP4. Modulates the effects of growth factors BMP2, BMP7 and FGF7 on renal branching morphogenesis. Required for coronary vascular development. Plays a role in regulating cell movements during gastrulation. The protein is Glypican-3 (Gpc3) of Rattus norvegicus (Rat).